Consider the following 292-residue polypeptide: Acetylglutamate kinase (292 aa).

Residues 64 to 65, Arg-86, and Asn-190 contribute to the substrate site; that span reads GG.

It belongs to the acetylglutamate kinase family. ArgB subfamily.

Its subcellular location is the cytoplasm. It carries out the reaction N-acetyl-L-glutamate + ATP = N-acetyl-L-glutamyl 5-phosphate + ADP. Its pathway is amino-acid biosynthesis; L-arginine biosynthesis; N(2)-acetyl-L-ornithine from L-glutamate: step 2/4. Its function is as follows. Catalyzes the ATP-dependent phosphorylation of N-acetyl-L-glutamate. This chain is Acetylglutamate kinase, found in Pelobacter propionicus (strain DSM 2379 / NBRC 103807 / OttBd1).